A 320-amino-acid chain; its full sequence is tRNA U34 carboxymethyltransferase (320 aa).

Carboxy-S-adenosyl-L-methionine-binding positions include K89, W103, K108, G127, 177–178 (LE), M193, Y197, and R312.

Belongs to the class I-like SAM-binding methyltransferase superfamily. CmoB family. As to quaternary structure, homotetramer.

It catalyses the reaction carboxy-S-adenosyl-L-methionine + 5-hydroxyuridine(34) in tRNA = 5-carboxymethoxyuridine(34) in tRNA + S-adenosyl-L-homocysteine + H(+). Catalyzes carboxymethyl transfer from carboxy-S-adenosyl-L-methionine (Cx-SAM) to 5-hydroxyuridine (ho5U) to form 5-carboxymethoxyuridine (cmo5U) at position 34 in tRNAs. In Stutzerimonas stutzeri (strain A1501) (Pseudomonas stutzeri), this protein is tRNA U34 carboxymethyltransferase.